The following is a 683-amino-acid chain: Protein distal antenna (683 aa).

One can recognise an HTH psq-type domain in the interval threonine 7–leucine 58. A DNA-binding region (H-T-H motif) is located at residues lysine 34 to asparagine 54. 5 disordered regions span residues threonine 220 to asparagine 255, serine 336 to glycine 369, serine 443 to isoleucine 525, asparagine 572 to glutamate 597, and glutamate 652 to lysine 683. Residues serine 227–serine 242 are compositionally biased toward low complexity. Polar residues-rich tracts occupy residues proline 338–glutamine 352 and threonine 445–aspartate 460. Residues isoleucine 462 to glycine 478 are compositionally biased toward acidic residues. Low complexity predominate over residues serine 575–asparagine 591.

Homomers. Interacts with itself, danr, ey and dac to form a complex (or complexes) containing the RD factors.

It is found in the nucleus. In terms of biological role, probable transcription factor with a role in the retinal determination (RD) network. Regulates ato expression and is required for normal R8 induction and differentiation. Danr appears to repress Dan expression, but Dan is required for Danr expression anterior to the morphogenetic furrow (MF). Dan and Danr lie downstream of so and require dac function for highest levels of expression. Contributes to differentiation of antenna-specific characteristics; effector gene that acts downstream of homothorax (hth), Distal-less (Dll), cut (ct) and spineless (ss) genes to control differentiation of distal antennal structures. In Drosophila pseudoobscura pseudoobscura (Fruit fly), this protein is Protein distal antenna.